Reading from the N-terminus, the 313-residue chain is Deoxyribonucleoside regulator (313 aa).

A DNA-binding region (H-T-H motif) is located at residues 23–42; sequence QQQIAEQLNISRPTVSRLLQ.

This sequence belongs to the SorC transcriptional regulatory family. Homooctamer.

Functionally, negative regulator of the dra-nupC-pdp operon. DeoR binds cooperatively to the operator DNA, which consists of a palindrome and a direct repeat sequence located 3' to the palindrome. In Bacillus subtilis (strain 168), this protein is Deoxyribonucleoside regulator.